The sequence spans 790 residues: Nuclear cap-binding protein subunit 1 (790 aa).

The disordered stretch occupies residues 1 to 26 (MSRRRHSYENDGGQPHKRRKTSDANE). Residues 3–20 (RRRHSYENDGGQPHKRRK) carry the Nuclear localization signal motif. Residue serine 7 is modified to Phosphoserine. A Phosphothreonine modification is found at threonine 21. A phosphoserine mark is found at serine 22 and serine 201. The 213-residue stretch at 28-240 (EDHLESLICK…CLWAQIQKLK (213 aa)) folds into the MIF4G domain. Lysine 204 bears the N6-acetyllysine mark. The stretch at 643–713 (STIRKMNKHV…SEQKNLFLVI (71 aa)) forms a coiled coil. Lysine 684 is covalently cross-linked (Glycyl lysine isopeptide (Lys-Gly) (interchain with G-Cter in SUMO2)). Lysine 698 carries the post-translational modification N6-acetyllysine.

The protein belongs to the NCBP1 family. In terms of assembly, component of the nuclear cap-binding complex (CBC), a heterodimer composed of NCBP1/CBP80 and NCBP2/CBP20 that interacts with m7GpppG-capped RNA. Found in a U snRNA export complex containing PHAX/RNUXA, NCBP1/CBP80, NCBP2/CBP20, RAN, XPO1 and m7G-capped RNA. Identified in a IGF2BP1-dependent mRNP granule complex containing untranslated mRNAs. Interacts with PHAX/RNUXA, SRRT/ARS2, EIF4G2, IGF2BP1, HNRNPF, HNRNPH1, KIAA0427/CTIF, PARN, DROSHA, UPF1 and ALYREF/THOC4. May interact with EIF4G1; the interaction is however controversial since it is reported by, and, but is not observed by. The large PER complex involved in the repression of transcriptional termination is composed of at least PER2, CDK9, DDX5, DHX9, NCBP1/CBP80 and POLR2A. Component of an alternative nuclear cap-binding complex (CBC) composed of NCBP1/CBP80 and NCBP3. Interacts with METTL3. Interacts with ZFC3H1 in a RNase-insensitive manner. Interacts with MTREX. Interacts with TASOR. Interacts with DHX34; the interaction is RNA-dependent. Interacts with KPNA3. In terms of processing, dephosphorylated at Thr-21 by the PNUTS-PP1 complex during RNA polymerase II transcription pause-release.

The protein resides in the nucleus. It is found in the cytoplasm. Its function is as follows. Component of the cap-binding complex (CBC), which binds cotranscriptionally to the 5'-cap of pre-mRNAs and is involved in various processes such as pre-mRNA splicing, translation regulation, nonsense-mediated mRNA decay, RNA-mediated gene silencing (RNAi) by microRNAs (miRNAs) and mRNA export. The CBC complex is involved in mRNA export from the nucleus via its interaction with ALYREF/THOC4/ALY, leading to the recruitment of the mRNA export machinery to the 5'-end of mRNA and to mRNA export in a 5' to 3' direction through the nuclear pore. The CBC complex is also involved in mediating U snRNA and intronless mRNAs export from the nucleus. The CBC complex is essential for a pioneer round of mRNA translation, before steady state translation when the CBC complex is replaced by cytoplasmic cap-binding protein eIF4E. The pioneer round of mRNA translation mediated by the CBC complex plays a central role in nonsense-mediated mRNA decay (NMD), NMD only taking place in mRNAs bound to the CBC complex, but not on eIF4E-bound mRNAs. The CBC complex enhances NMD in mRNAs containing at least one exon-junction complex (EJC) via its interaction with UPF1, promoting the interaction between UPF1 and UPF2. The CBC complex is also involved in 'failsafe' NMD, which is independent of the EJC complex, while it does not participate in Staufen-mediated mRNA decay (SMD). During cell proliferation, the CBC complex is also involved in microRNAs (miRNAs) biogenesis via its interaction with SRRT/ARS2 and is required for miRNA-mediated RNA interference. The CBC complex also acts as a negative regulator of PARN, thereby acting as an inhibitor of mRNA deadenylation. In the CBC complex, NCBP1/CBP80 does not bind directly capped RNAs (m7GpppG-capped RNA) but is required to stabilize the movement of the N-terminal loop of NCBP2/CBP20 and lock the CBC into a high affinity cap-binding state with the cap structure. Associates with NCBP3 to form an alternative cap-binding complex (CBC) which plays a key role in mRNA export and is particularly important in cellular stress situations such as virus infections. The conventional CBC with NCBP2 binds both small nuclear RNA (snRNA) and messenger (mRNA) and is involved in their export from the nucleus whereas the alternative CBC with NCBP3 does not bind snRNA and associates only with mRNA thereby playing a role only in mRNA export. NCBP1/CBP80 is required for cell growth and viability. In Rattus norvegicus (Rat), this protein is Nuclear cap-binding protein subunit 1 (Ncbp1).